The chain runs to 631 residues: ATP-dependent RNA helicase mrh4, mitochondrial (631 aa).

The transit peptide at 1 to 39 (MYPLGRVSLPVRSPVCLFCQNRTSSLLPSAYVWQSARTM) directs the protein to the mitochondrion. The tract at residues 55–111 (PNVAKTSLKKKRNDTDRFGPFAGMNQTEARIRDDPRSRSPASLKRSKAPSDESGRKD) is disordered. Residues 102 to 111 (APSDESGRKD) show a composition bias toward basic and acidic residues. The Q motif motif lies at 143–176 (TSFDQFPLLPVVRHSIFSQALPGLHDVTPTPIQR). The segment at 181 to 200 (RLLDDTNKDKKPKKRAEGEP) is disordered. Residues 196 to 408 (AEGEPEYDQY…RKKYPDIQRL (213 aa)) enclose the Helicase ATP-binding domain. 209 to 216 (AETGSGKT) is a binding site for ATP. The DEAD box signature appears at 355-358 (DEAD). The region spanning 442–631 (DVIWSIGKAG…EGMFRGQALI (190 aa)) is the Helicase C-terminal domain.

The protein belongs to the DEAD box helicase family. MRH4 subfamily.

It is found in the mitochondrion. The catalysed reaction is ATP + H2O = ADP + phosphate + H(+). Its function is as follows. ATP-binding RNA helicase involved in mitochondrial RNA metabolism. Required for maintenance of mitochondrial DNA. This is ATP-dependent RNA helicase mrh4, mitochondrial (mrh4) from Aspergillus terreus (strain NIH 2624 / FGSC A1156).